A 427-amino-acid chain; its full sequence is Trigger factor (427 aa).

One can recognise a PPIase FKBP-type domain in the interval 163-248 (GDTVILDFEG…LHEIKTKEVP (86 aa)).

It belongs to the FKBP-type PPIase family. Tig subfamily.

It is found in the cytoplasm. It catalyses the reaction [protein]-peptidylproline (omega=180) = [protein]-peptidylproline (omega=0). Involved in protein export. Acts as a chaperone by maintaining the newly synthesized protein in an open conformation. Functions as a peptidyl-prolyl cis-trans isomerase. The protein is Trigger factor of Listeria monocytogenes serotype 4a (strain HCC23).